We begin with the raw amino-acid sequence, 61 residues long: uncharacterized protein (61 aa).

This is an uncharacterized protein from Frog virus 3 (isolate Goorha) (FV-3).